A 308-amino-acid polypeptide reads, in one-letter code: GTPase Era (308 aa).

Residues 14 to 181 (RCGFVALIGA…RRALAAAMPE (168 aa)) form the Era-type G domain. Residues 22-29 (GAPNVGKS) are G1. 22–29 (GAPNVGKS) contacts GTP. The tract at residues 48-52 (QTTRA) is G2. Residues 69–72 (DTPG) form a G3 region. GTP-binding positions include 69–73 (DTPGI) and 131–134 (NKID). A G4 region spans residues 131–134 (NKID). A G5 region spans residues 160–162 (VAA). The region spanning 212–289 (LHQELPYQST…HLFLFVKVRD (78 aa)) is the KH type-2 domain.

This sequence belongs to the TRAFAC class TrmE-Era-EngA-EngB-Septin-like GTPase superfamily. Era GTPase family. Monomer.

It is found in the cytoplasm. It localises to the cell inner membrane. Functionally, an essential GTPase that binds both GDP and GTP, with rapid nucleotide exchange. Plays a role in 16S rRNA processing and 30S ribosomal subunit biogenesis and possibly also in cell cycle regulation and energy metabolism. This Afipia carboxidovorans (strain ATCC 49405 / DSM 1227 / KCTC 32145 / OM5) (Oligotropha carboxidovorans) protein is GTPase Era.